The sequence spans 144 residues: MIALIQRVSEAAVKVDGEVTGEINQGLLILLGVEREDDEAKAKRLMERVLTYRVFEDQDGKMNLNVQQVNGSVLVVSQFTLPADTKKGTRPGFSKGAHPVDAERLYDYFSDLCEEKLHTQRGRFAADMKVSLVNDGPVTFWLQV.

Residues 136–137 carry the Gly-cisPro motif, important for rejection of L-amino acids motif; the sequence is GP.

This sequence belongs to the DTD family. Homodimer.

It is found in the cytoplasm. The catalysed reaction is glycyl-tRNA(Ala) + H2O = tRNA(Ala) + glycine + H(+). It carries out the reaction a D-aminoacyl-tRNA + H2O = a tRNA + a D-alpha-amino acid + H(+). In terms of biological role, an aminoacyl-tRNA editing enzyme that deacylates mischarged D-aminoacyl-tRNAs. Also deacylates mischarged glycyl-tRNA(Ala), protecting cells against glycine mischarging by AlaRS. Acts via tRNA-based rather than protein-based catalysis; rejects L-amino acids rather than detecting D-amino acids in the active site. By recycling D-aminoacyl-tRNA to D-amino acids and free tRNA molecules, this enzyme counteracts the toxicity associated with the formation of D-aminoacyl-tRNA entities in vivo and helps enforce protein L-homochirality. The sequence is that of D-aminoacyl-tRNA deacylase from Aliivibrio fischeri (strain MJ11) (Vibrio fischeri).